The chain runs to 688 residues: Glycine--tRNA ligase beta subunit (688 aa).

The protein belongs to the class-II aminoacyl-tRNA synthetase family. Tetramer of two alpha and two beta subunits.

It localises to the cytoplasm. The catalysed reaction is tRNA(Gly) + glycine + ATP = glycyl-tRNA(Gly) + AMP + diphosphate. In Clostridioides difficile (strain 630) (Peptoclostridium difficile), this protein is Glycine--tRNA ligase beta subunit.